A 508-amino-acid chain; its full sequence is Photosystem II CP47 reaction center protein (508 aa).

The next 6 membrane-spanning stretches (helical) occupy residues 21 to 36, 101 to 115, 140 to 156, 203 to 218, 237 to 252, and 457 to 472; these read AVHLMHTALVSGWAGS, ILLSGALFMAAIWHW, GIHLFLSGLLCFGFGAF, IAAGILGILAGLFHLS, VLSSSIAAVFWAAFVV, and WFALLFFFGHIWHGAR.

The protein belongs to the PsbB/PsbC family. PsbB subfamily. In terms of assembly, PSII is composed of 1 copy each of membrane proteins PsbA, PsbB, PsbC, PsbD, PsbE, PsbF, PsbH, PsbI, PsbJ, PsbK, PsbL, PsbM, PsbT, PsbX, PsbY, PsbZ, Psb30/Ycf12, at least 3 peripheral proteins of the oxygen-evolving complex and a large number of cofactors. It forms dimeric complexes. Requires Binds multiple chlorophylls. PSII binds additional chlorophylls, carotenoids and specific lipids. as cofactor.

It localises to the plastid. Its subcellular location is the chloroplast thylakoid membrane. Its function is as follows. One of the components of the core complex of photosystem II (PSII). It binds chlorophyll and helps catalyze the primary light-induced photochemical processes of PSII. PSII is a light-driven water:plastoquinone oxidoreductase, using light energy to abstract electrons from H(2)O, generating O(2) and a proton gradient subsequently used for ATP formation. The sequence is that of Photosystem II CP47 reaction center protein from Nephroselmis olivacea (Green alga).